Here is a 183-residue protein sequence, read N- to C-terminus: Hypoxanthine/guanine phosphoribosyltransferase (183 aa).

The protein belongs to the purine/pyrimidine phosphoribosyltransferase family. Archaeal HPRT subfamily. As to quaternary structure, homodimer.

The protein resides in the cytoplasm. It carries out the reaction IMP + diphosphate = hypoxanthine + 5-phospho-alpha-D-ribose 1-diphosphate. It catalyses the reaction GMP + diphosphate = guanine + 5-phospho-alpha-D-ribose 1-diphosphate. It participates in purine metabolism; IMP biosynthesis via salvage pathway; IMP from hypoxanthine: step 1/1. In terms of biological role, catalyzes a salvage reaction resulting in the formation of IMP that is energically less costly than de novo synthesis. The sequence is that of Hypoxanthine/guanine phosphoribosyltransferase from Methanotorris igneus (strain DSM 5666 / JCM 11834 / Kol 5).